The primary structure comprises 485 residues: UDP-N-acetylmuramate--L-alanine ligase (485 aa).

ATP is bound at residue Gly-120–Thr-126.

It belongs to the MurCDEF family.

The protein localises to the cytoplasm. It catalyses the reaction UDP-N-acetyl-alpha-D-muramate + L-alanine + ATP = UDP-N-acetyl-alpha-D-muramoyl-L-alanine + ADP + phosphate + H(+). It functions in the pathway cell wall biogenesis; peptidoglycan biosynthesis. In terms of biological role, cell wall formation. The sequence is that of UDP-N-acetylmuramate--L-alanine ligase from Rickettsia africae (strain ESF-5).